The following is a 350-amino-acid chain: tRNA uridine(34) hydroxylase (350 aa).

One can recognise a Rhodanese domain in the interval 146–240 (DDPDALFIDM…YARKAREQGL (95 aa)). The Cysteine persulfide intermediate role is filled by C200.

It belongs to the TrhO family.

It carries out the reaction uridine(34) in tRNA + AH2 + O2 = 5-hydroxyuridine(34) in tRNA + A + H2O. Its function is as follows. Catalyzes oxygen-dependent 5-hydroxyuridine (ho5U) modification at position 34 in tRNAs. The protein is tRNA uridine(34) hydroxylase of Shigella flexneri serotype 5b (strain 8401).